Reading from the N-terminus, the 367-residue chain is 3-dehydroquinate synthase (367 aa).

NAD(+) contacts are provided by residues 69–74 (DGEAFK), 103–107 (GVIGD), 127–128 (TT), K140, and K149. Positions 182, 245, and 262 each coordinate Zn(2+).

This sequence belongs to the sugar phosphate cyclases superfamily. Dehydroquinate synthase family. It depends on NAD(+) as a cofactor. The cofactor is Co(2+). Zn(2+) serves as cofactor.

The protein localises to the cytoplasm. It carries out the reaction 7-phospho-2-dehydro-3-deoxy-D-arabino-heptonate = 3-dehydroquinate + phosphate. It functions in the pathway metabolic intermediate biosynthesis; chorismate biosynthesis; chorismate from D-erythrose 4-phosphate and phosphoenolpyruvate: step 2/7. Its function is as follows. Catalyzes the conversion of 3-deoxy-D-arabino-heptulosonate 7-phosphate (DAHP) to dehydroquinate (DHQ). This chain is 3-dehydroquinate synthase, found in Pseudomonas syringae pv. tomato (strain ATCC BAA-871 / DC3000).